We begin with the raw amino-acid sequence, 515 residues long: 1-pyrroline-5-carboxylate dehydrogenase 2 (515 aa).

Residues Glu286 and Cys320 contribute to the active site.

This sequence belongs to the aldehyde dehydrogenase family. RocA subfamily.

It carries out the reaction L-glutamate 5-semialdehyde + NAD(+) + H2O = L-glutamate + NADH + 2 H(+). It functions in the pathway amino-acid degradation; L-proline degradation into L-glutamate; L-glutamate from L-proline: step 2/2. The protein is 1-pyrroline-5-carboxylate dehydrogenase 2 (rocA2) of Halalkalibacterium halodurans (strain ATCC BAA-125 / DSM 18197 / FERM 7344 / JCM 9153 / C-125) (Bacillus halodurans).